We begin with the raw amino-acid sequence, 298 residues long: tRNA pseudouridine synthase-like 1 (298 aa).

The Nucleophile role is filled by D60. Y124 contacts substrate.

Belongs to the tRNA pseudouridine synthase TruA family.

The enzyme catalyses a uridine in tRNA = a pseudouridine in tRNA. In Xenopus laevis (African clawed frog), this protein is tRNA pseudouridine synthase-like 1 (pusl1).